The following is a 109-amino-acid chain: Small ribosomal subunit protein uS17 (109 aa).

This sequence belongs to the universal ribosomal protein uS17 family. Part of the 30S ribosomal subunit.

Functionally, one of the primary rRNA binding proteins, it binds specifically to the 5'-end of 16S ribosomal RNA. The protein is Small ribosomal subunit protein uS17 of Halobacterium salinarum (strain ATCC 29341 / DSM 671 / R1).